A 90-amino-acid chain; its full sequence is Secretory calcium-binding phosphoprotein proline-glutamine-rich 1 (90 aa).

A signal peptide spans 1–15 (MQLFLLAALLSAAAA).

Expressed in enamel organ.

The protein localises to the secreted. Tooth-associated epithelia protein that may participate in structuring the basal lamina at cell-tooth interface. The polypeptide is Secretory calcium-binding phosphoprotein proline-glutamine-rich 1 (Mus musculus (Mouse)).